The primary structure comprises 507 residues: ATP synthase subunit alpha, chloroplastic (507 aa).

Residue 170–177 coordinates ATP; the sequence is GDRQTGKT.

Belongs to the ATPase alpha/beta chains family. F-type ATPases have 2 components, CF(1) - the catalytic core - and CF(0) - the membrane proton channel. CF(1) has five subunits: alpha(3), beta(3), gamma(1), delta(1), epsilon(1). CF(0) has four main subunits: a, b, b' and c.

The protein localises to the plastid. The protein resides in the chloroplast thylakoid membrane. It catalyses the reaction ATP + H2O + 4 H(+)(in) = ADP + phosphate + 5 H(+)(out). Produces ATP from ADP in the presence of a proton gradient across the membrane. The alpha chain is a regulatory subunit. This chain is ATP synthase subunit alpha, chloroplastic, found in Gossypium barbadense (Sea Island cotton).